The following is a 916-amino-acid chain: Internalin J (916 aa).

The signal sequence occupies residues 1 to 25 (MKTSKIIIASLVSLTLVSNPILTFA). LRR repeat units follow at residues 94–115 (TLTS…EKLT), 116–136 (GLTK…SQNT), 137–157 (NLTY…TPLT), 158–179 (KLTY…QNPL), 180–200 (LTYL…HNTQ), 201–221 (LTEL…TPQT), 222–243 (QLTT…QNKL), 244–263 (LNRL…NQNI), 264–284 (QLTF…TPLT), 285–306 (QLTY…TLSK), 316–325 (DLLEIDLTHN), 338–357 (KIKE…DCQA), 359–368 (GITELDLSQN), and 380–402 (ELTK…NAHI). 5 consecutive MucBP domains span residues 506-568 (PIKG…SQSV), 576-638 (IVAA…SQTV), 646-708 (IVAA…AQTV), 717-779 (APEK…SQTV), and 787-849 (IVAA…AQTV). The disordered stretch occupies residues 862–888 (PLPDKKTTKPSNLKTTEVKKASDTLPK). Residues 886–890 (LPKTG) carry the LPXTG sorting signal motif. A Pentaglycyl murein peptidoglycan amidated threonine modification is found at Thr-889. The propeptide at 890 to 916 (GDSTPWKSALLGVFLSSTALVIWKKKK) is removed by sortase.

Belongs to the internalin family.

It is found in the secreted. It localises to the cell wall. In terms of biological role, involved in several steps of L.monocytogenes infection, probably improves adhesin to host cells. In Listeria monocytogenes serotype 4b (strain F2365), this protein is Internalin J (inlJ).